Consider the following 430-residue polypeptide: FAD-dependent monooxygenase asL4 (430 aa).

FAD is bound by residues 11-14 (GGIA), 33-34 (ER), arginine 108, and tyrosine 278.

This sequence belongs to the aromatic-ring hydroxylase family. FAD serves as cofactor.

It participates in secondary metabolite biosynthesis; terpenoid biosynthesis. Flavin-dependent monooxygenase; part of the gene cluster that mediates the biosynthesis of xenovulene A, an unusual meroterpenoid that has potent inhibitory effects on the human gamma-aminobutyrate A (GABAA) benzodiazepine receptor. The first step of xenovulene A biosynthesis is the biosynthesis of 3-methylorcinaldehyde performed by the non-reducing polyketide synthase aspks1. The salicylate hydroxylase asL1 then catalyzes the oxidative dearomatization of 3-methylorcinaldehyde to yield a dearomatized hydroxycyclohexadione. The 2-oxoglutarate-dependent dioxygenase asL3 further catalyzes the oxidative ring expansion to provide the first tropolone metabolite. The cytochrome P450 monooxygenase asR2 allows the synthesis of tropolone hemiacetal. In parallel, a previously unrecognised class of terpene cyclase, asR6, produces alpha-humulene from farnesylpyrophosphate (FPP). The putative Diels-Alderase asR5 probably catalyzes the formation of the tropolone-humulene skeleton by linking humulene and the polyketide moiety. Oxidative-ring contractions catalyzed by asL4 and asL6 then processively remove carbon atoms from the polyketide to yield xenovulene A. The polypeptide is FAD-dependent monooxygenase asL4 (Sarocladium schorii (Acremonium strictum (strain IMI 501407))).